We begin with the raw amino-acid sequence, 266 residues long: MKEIKVIIAGPRGRMGHEAVLLMERTEHFNLVAAVDYKHGGEKISDLPGMPALDAPIYADLHTCLEEVEADVLLDLTTPEVGKQHVTLAVERGLRSVIGTTGFTEEELKQLTEIAKEKAVGTIIAPNFAIGAVLMMKFSQMAAKYFQDVEVIELHHDQKLDAPSGTAVKTVELIRQNRESKQQGHPNEVEQLEGARGANVDGIHIHSVRLPGLIAHQEVMFGGDGQMLTVRHDSFNRASFMSGVKLSIETVMNLDHLVYGLENIID.

Position 10-15 (10-15 (GPRGRM)) interacts with NAD(+). Lysine 38 lines the NADP(+) pocket. NAD(+) is bound by residues 99–101 (GTT) and 125–128 (APNF). Catalysis depends on histidine 155, which acts as the Proton donor/acceptor. A (S)-2,3,4,5-tetrahydrodipicolinate-binding site is contributed by histidine 156. Lysine 159 (proton donor) is an active-site residue. 165-166 (GT) is a (S)-2,3,4,5-tetrahydrodipicolinate binding site.

This sequence belongs to the DapB family.

Its subcellular location is the cytoplasm. The catalysed reaction is (S)-2,3,4,5-tetrahydrodipicolinate + NAD(+) + H2O = (2S,4S)-4-hydroxy-2,3,4,5-tetrahydrodipicolinate + NADH + H(+). It catalyses the reaction (S)-2,3,4,5-tetrahydrodipicolinate + NADP(+) + H2O = (2S,4S)-4-hydroxy-2,3,4,5-tetrahydrodipicolinate + NADPH + H(+). It participates in amino-acid biosynthesis; L-lysine biosynthesis via DAP pathway; (S)-tetrahydrodipicolinate from L-aspartate: step 4/4. Functionally, catalyzes the conversion of 4-hydroxy-tetrahydrodipicolinate (HTPA) to tetrahydrodipicolinate. The sequence is that of 4-hydroxy-tetrahydrodipicolinate reductase from Bacillus cereus (strain ZK / E33L).